We begin with the raw amino-acid sequence, 89 residues long: Small ribosomal subunit protein uS14 (89 aa).

This sequence belongs to the universal ribosomal protein uS14 family. As to quaternary structure, part of the 30S ribosomal subunit. Contacts proteins S3 and S10.

In terms of biological role, binds 16S rRNA, required for the assembly of 30S particles and may also be responsible for determining the conformation of the 16S rRNA at the A site. The chain is Small ribosomal subunit protein uS14 from Latilactobacillus sakei subsp. sakei (strain 23K) (Lactobacillus sakei subsp. sakei).